Consider the following 273-residue polypeptide: Formamidopyrimidine-DNA glycosylase (273 aa).

Pro-2 acts as the Schiff-base intermediate with DNA in catalysis. Glu-3 functions as the Proton donor in the catalytic mechanism. Lys-57 serves as the catalytic Proton donor; for beta-elimination activity. DNA contacts are provided by His-91, Arg-110, and Lys-151. The FPG-type zinc-finger motif lies at 236-270 (QVYGRKGEACNDCGTIIEAKVIGQRNSYFCPHCQI). Arg-260 (proton donor; for delta-elimination activity) is an active-site residue.

This sequence belongs to the FPG family. As to quaternary structure, monomer. It depends on Zn(2+) as a cofactor.

The enzyme catalyses Hydrolysis of DNA containing ring-opened 7-methylguanine residues, releasing 2,6-diamino-4-hydroxy-5-(N-methyl)formamidopyrimidine.. It catalyses the reaction 2'-deoxyribonucleotide-(2'-deoxyribose 5'-phosphate)-2'-deoxyribonucleotide-DNA = a 3'-end 2'-deoxyribonucleotide-(2,3-dehydro-2,3-deoxyribose 5'-phosphate)-DNA + a 5'-end 5'-phospho-2'-deoxyribonucleoside-DNA + H(+). Involved in base excision repair of DNA damaged by oxidation or by mutagenic agents. Acts as a DNA glycosylase that recognizes and removes damaged bases. Has a preference for oxidized purines, such as 7,8-dihydro-8-oxoguanine (8-oxoG). Has AP (apurinic/apyrimidinic) lyase activity and introduces nicks in the DNA strand. Cleaves the DNA backbone by beta-delta elimination to generate a single-strand break at the site of the removed base with both 3'- and 5'-phosphates. The polypeptide is Formamidopyrimidine-DNA glycosylase (Actinobacillus pleuropneumoniae serotype 7 (strain AP76)).